The chain runs to 327 residues: Secondary metabolism regulator LAE1 (327 aa).

This sequence belongs to the methyltransferase superfamily. LaeA methyltransferase family.

The protein resides in the nucleus. The enzyme catalyses L-methionyl-[protein] + S-adenosyl-L-methionine = S-methyl-L-methionyl-[protein] + S-adenosyl-L-homocysteine. Secondary metabolism regulator that controls the expression of the tenuazonic acid biosynthesis cluster. Methyltransferase that performs automethylation. No other methyl-accepting substrate has been identified yet. The chain is Secondary metabolism regulator LAE1 from Pyricularia oryzae (strain 70-15 / ATCC MYA-4617 / FGSC 8958) (Rice blast fungus).